The sequence spans 484 residues: Adenylosuccinate lyase (484 aa).

Ala-2 carries the post-translational modification N-acetylalanine. Substrate contacts are provided by residues 20–21 (RY), 85–87 (RHD), and 111–112 (TS). Lys-147 is subject to N6-acetyllysine. Residue His-159 is the Proton donor/acceptor of the active site. Gln-241 contacts substrate. The active-site Proton donor/acceptor is Ser-289. At Lys-295 the chain carries N6-acetyllysine. Residues Arg-303, Arg-329, Ser-334, and Arg-338 each coordinate substrate. Lys-415 participates in a covalent cross-link: Glycyl lysine isopeptide (Lys-Gly) (interchain with G-Cter in SUMO1).

Belongs to the lyase 1 family. Adenylosuccinate lyase subfamily. As to quaternary structure, homotetramer. Residues from neighboring subunits contribute catalytic and substrate-binding residues to each active site.

The enzyme catalyses N(6)-(1,2-dicarboxyethyl)-AMP = fumarate + AMP. It catalyses the reaction (2S)-2-[5-amino-1-(5-phospho-beta-D-ribosyl)imidazole-4-carboxamido]succinate = 5-amino-1-(5-phospho-beta-D-ribosyl)imidazole-4-carboxamide + fumarate. The protein operates within purine metabolism; AMP biosynthesis via de novo pathway; AMP from IMP: step 2/2. It functions in the pathway purine metabolism; IMP biosynthesis via de novo pathway; 5-amino-1-(5-phospho-D-ribosyl)imidazole-4-carboxamide from 5-amino-1-(5-phospho-D-ribosyl)imidazole-4-carboxylate: step 2/2. In terms of biological role, catalyzes two non-sequential steps in de novo AMP synthesis: converts (S)-2-(5-amino-1-(5-phospho-D-ribosyl)imidazole-4-carboxamido)succinate (SAICAR) to fumarate plus 5-amino-1-(5-phospho-D-ribosyl)imidazole-4-carboxamide, and thereby also contributes to de novo IMP synthesis, and converts succinyladenosine monophosphate (SAMP) to AMP and fumarate. In Macaca fascicularis (Crab-eating macaque), this protein is Adenylosuccinate lyase (ADSL).